The following is a 706-amino-acid chain: Translation initiation factor IF-2 (706 aa).

The segment covering 55–81 (AKETANEKPAEQKKQSSNKINDRKKND) has biased composition (basic and acidic residues). Residues 55–127 (AKETANEKPA…KPKKELPEKI (73 aa)) form a disordered region. Residues 82 to 98 (VQNNQFNKNKKNNNQNK) are compositionally biased toward low complexity. Residues 207-376 (VRPPVVTIMG…LLVSEVGELK (170 aa)) form the tr-type G domain. Residues 216–223 (GHVDHGKT) form a G1 region. 216–223 (GHVDHGKT) is a binding site for GTP. The G2 stretch occupies residues 241-245 (GITQH). Positions 262 to 265 (DTPG) are G3. GTP contacts are provided by residues 262 to 266 (DTPGH) and 316 to 319 (NKID). The tract at residues 316–319 (NKID) is G4. The G5 stretch occupies residues 352–354 (SAK).

Belongs to the TRAFAC class translation factor GTPase superfamily. Classic translation factor GTPase family. IF-2 subfamily.

It localises to the cytoplasm. Its function is as follows. One of the essential components for the initiation of protein synthesis. Protects formylmethionyl-tRNA from spontaneous hydrolysis and promotes its binding to the 30S ribosomal subunits. Also involved in the hydrolysis of GTP during the formation of the 70S ribosomal complex. In Bacillus pumilus (strain SAFR-032), this protein is Translation initiation factor IF-2.